The sequence spans 221 residues: Peroxiredoxin 2 (221 aa).

Residues 15–170 (PQIGAPAPDF…IIRIIDALQT (156 aa)) enclose the Thioredoxin domain. The Cysteine sulfenic acid (-SOH) intermediate role is filled by C56. Substrate is bound at residue R133. C211 and C217 are disulfide-bonded.

The protein belongs to the peroxiredoxin family. Prx6 subfamily. Homodecamer. Pentamer of dimers that assemble into a ring structure.

The protein localises to the cytoplasm. The enzyme catalyses a hydroperoxide + [thioredoxin]-dithiol = an alcohol + [thioredoxin]-disulfide + H2O. In terms of biological role, thiol-specific peroxidase that catalyzes the reduction of hydrogen peroxide and organic hydroperoxides to water and alcohols, respectively. Plays a role in cell protection against oxidative stress by detoxifying peroxides. The protein is Peroxiredoxin 2 of Caldanaerobacter subterraneus subsp. tengcongensis (strain DSM 15242 / JCM 11007 / NBRC 100824 / MB4) (Thermoanaerobacter tengcongensis).